The following is a 341-amino-acid chain: Glycerol-3-phosphate dehydrogenase [NAD(P)+] (341 aa).

S14, F15, R35, and K108 together coordinate NADPH. Residues K108 and G136 each contribute to the sn-glycerol 3-phosphate site. A140 contributes to the NADPH binding site. Sn-glycerol 3-phosphate contacts are provided by K191, D244, S254, R255, and N256. Residue K191 is the Proton acceptor of the active site. R255 contacts NADPH. V279 and E281 together coordinate NADPH.

The protein belongs to the NAD-dependent glycerol-3-phosphate dehydrogenase family.

It is found in the cytoplasm. The catalysed reaction is sn-glycerol 3-phosphate + NAD(+) = dihydroxyacetone phosphate + NADH + H(+). The enzyme catalyses sn-glycerol 3-phosphate + NADP(+) = dihydroxyacetone phosphate + NADPH + H(+). The protein operates within membrane lipid metabolism; glycerophospholipid metabolism. Catalyzes the reduction of the glycolytic intermediate dihydroxyacetone phosphate (DHAP) to sn-glycerol 3-phosphate (G3P), the key precursor for phospholipid synthesis. This is Glycerol-3-phosphate dehydrogenase [NAD(P)+] from Pseudomonas savastanoi pv. phaseolicola (strain 1448A / Race 6) (Pseudomonas syringae pv. phaseolicola (strain 1448A / Race 6)).